The chain runs to 736 residues: Ethylene receptor 2 (736 aa).

The next 3 helical transmembrane spans lie at 22-42, 53-73, and 94-114; these read ISDF…VYFV, VLVQ…INLW, and AAVS…LLSV. 2 residues coordinate Cu cation: Cys-64 and His-68. In terms of domain architecture, GAF spans 157–305; sequence DRHTILKTTL…VVADQVAVAL (149 aa). Residues 348-585 enclose the Histidine kinase domain; it reads VMNHEMRTPM…TAIFIVKLGI (238 aa). His-351 carries the post-translational modification Phosphohistidine; by autocatalysis. Residues 613-730 enclose the Response regulatory domain; the sequence is KVLVMDDNGF…KMRSVLSGLL (118 aa). Asp-661 is modified (4-aspartylphosphate).

The protein belongs to the ethylene receptor family. As to quaternary structure, homodimer; disulfide-linked. Cu cation serves as cofactor. Post-translationally, activation probably requires a transfer of a phosphate group between a His in the transmitter domain and an Asp of the receiver domain. In terms of tissue distribution, leaves, flowers and fruits.

It is found in the endoplasmic reticulum membrane. It carries out the reaction ATP + protein L-histidine = ADP + protein N-phospho-L-histidine.. Its function is as follows. May act early in the ethylene signal transduction pathway, possibly as an ethylene receptor, or as a regulator of the pathway. This Solanum lycopersicum (Tomato) protein is Ethylene receptor 2 (ETR2).